We begin with the raw amino-acid sequence, 431 residues long: 5-methylthioadenosine/S-adenosylhomocysteine deaminase (431 aa).

Zn(2+) is bound by residues His60 and His62. Residues Glu89 and His182 each contribute to the substrate site. Residue His209 participates in Zn(2+) binding. Glu212 and Asp297 together coordinate substrate. Asp297 contributes to the Zn(2+) binding site.

It belongs to the metallo-dependent hydrolases superfamily. MTA/SAH deaminase family. It depends on Zn(2+) as a cofactor.

The enzyme catalyses S-adenosyl-L-homocysteine + H2O + H(+) = S-inosyl-L-homocysteine + NH4(+). The catalysed reaction is S-methyl-5'-thioadenosine + H2O + H(+) = S-methyl-5'-thioinosine + NH4(+). Catalyzes the deamination of 5-methylthioadenosine and S-adenosyl-L-homocysteine into 5-methylthioinosine and S-inosyl-L-homocysteine, respectively. Is also able to deaminate adenosine. In Natronomonas pharaonis (strain ATCC 35678 / DSM 2160 / CIP 103997 / JCM 8858 / NBRC 14720 / NCIMB 2260 / Gabara) (Halobacterium pharaonis), this protein is 5-methylthioadenosine/S-adenosylhomocysteine deaminase.